Here is a 371-residue protein sequence, read N- to C-terminus: Chorismate synthase (371 aa).

Residues R48 and R54 each coordinate NADP(+). Residues 125–127 (RSS), 238–239 (NA), G278, 293–297 (KPTSS), and R319 contribute to the FMN site.

This sequence belongs to the chorismate synthase family. As to quaternary structure, homotetramer. The cofactor is FMNH2.

The enzyme catalyses 5-O-(1-carboxyvinyl)-3-phosphoshikimate = chorismate + phosphate. It participates in metabolic intermediate biosynthesis; chorismate biosynthesis; chorismate from D-erythrose 4-phosphate and phosphoenolpyruvate: step 7/7. In terms of biological role, catalyzes the anti-1,4-elimination of the C-3 phosphate and the C-6 proR hydrogen from 5-enolpyruvylshikimate-3-phosphate (EPSP) to yield chorismate, which is the branch point compound that serves as the starting substrate for the three terminal pathways of aromatic amino acid biosynthesis. This reaction introduces a second double bond into the aromatic ring system. The protein is Chorismate synthase of Saccharophagus degradans (strain 2-40 / ATCC 43961 / DSM 17024).